The following is a 615-amino-acid chain: Protein translocase subunit SecD (615 aa).

6 helical membrane passes run 10–30, 452–472, 477–497, 504–524, 548–570, and 585–605; these read YVML…NLFG, QGLE…IIFY, LIAT…MSLL, MPGI…NVLI, GAFS…LYAV, and GVAT…NLLY.

It belongs to the SecD/SecF family. SecD subfamily. Forms a complex with SecF. Part of the essential Sec protein translocation apparatus which comprises SecA, SecYEG and auxiliary proteins SecDF-YajC and YidC.

Its subcellular location is the cell inner membrane. Part of the Sec protein translocase complex. Interacts with the SecYEG preprotein conducting channel. SecDF uses the proton motive force (PMF) to complete protein translocation after the ATP-dependent function of SecA. This is Protein translocase subunit SecD from Shigella flexneri.